Consider the following 184-residue polypeptide: Major fimbrial subunit (184 aa).

The signal sequence occupies residues 1 to 22 (MKLSKIALAAALVFGINSVATA). A disulfide bridge links C49 with C88.

This sequence belongs to the fimbrial protein family.

It localises to the fimbrium. Functionally, major structural component of PMF fimbriae. This chain is Major fimbrial subunit (pmfA), found in Proteus mirabilis (strain HI4320).